The following is a 415-amino-acid chain: Probable carboxypeptidase ACLA_013260 (415 aa).

The N-terminal stretch at 1–17 (MKFPWLLLVKGAASVAA) is a signal peptide. Residue asparagine 97 is glycosylated (N-linked (GlcNAc...) asparagine). Aspartate 145 is a binding site for Zn(2+). Glutamate 177 functions as the Proton acceptor in the catalytic mechanism. Glutamate 178 provides a ligand contact to Zn(2+). Asparagine 271 is a glycosylation site (N-linked (GlcNAc...) asparagine).

Belongs to the peptidase M20A family. Zn(2+) serves as cofactor.

It localises to the secreted. This chain is Probable carboxypeptidase ACLA_013260, found in Aspergillus clavatus (strain ATCC 1007 / CBS 513.65 / DSM 816 / NCTC 3887 / NRRL 1 / QM 1276 / 107).